A 165-amino-acid chain; its full sequence is ER membrane protein complex subunit 5 (165 aa).

At 1-3 the chain is on the cytoplasmic side; it reads MAP. A helical transmembrane segment spans residues 4 to 22; sequence SLWKGLVGIGLFALAHAAF. Residues 23–77 are Lumenal-facing; that stretch reads SAAQHYFPSSGIKWKRKCEFLQSSSFQDKIFRSMYYVYDRSYMRLTEKEDESLPI. Residues 78-97 form a helical membrane-spanning segment; it reads DIVLQTLLAFAVTCYGIVHI. Over 98–165 the chain is Cytoplasmic; sequence AGEFKDMDAT…KLRKLESLRR (68 aa). Position 154 is a phosphoserine (serine 154).

Belongs to the membrane magnesium transporter (TC 1.A.67) family. Component of the ER membrane protein complex (EMC).

Its subcellular location is the endoplasmic reticulum membrane. The protein resides in the golgi apparatus membrane. It is found in the early endosome membrane. Part of the endoplasmic reticulum membrane protein complex (EMC) that enables the energy-independent insertion into endoplasmic reticulum membranes of newly synthesized membrane proteins. Preferentially accommodates proteins with transmembrane domains that are weakly hydrophobic or contain destabilizing features such as charged and aromatic residues. Involved in the cotranslational insertion of multi-pass membrane proteins in which stop-transfer membrane-anchor sequences become ER membrane spanning helices. It is also required for the post-translational insertion of tail-anchored/TA proteins in endoplasmic reticulum membranes. By mediating the proper cotranslational insertion of N-terminal transmembrane domains in an N-exo topology, with translocated N-terminus in the lumen of the ER, controls the topology of multi-pass membrane proteins like the G protein-coupled receptors. By regulating the insertion of various proteins in membranes, it is indirectly involved in many cellular processes. May be involved in Mg(2+) transport. The polypeptide is ER membrane protein complex subunit 5 (Bos taurus (Bovine)).